A 122-amino-acid polypeptide reads, in one-letter code: Basic phospholipase A2 LmTX-I (122 aa).

6 disulfides stabilise this stretch: C26–C115, C28–C44, C43–C95, C49–C122, C50–C88, and C75–C86. Positions 27, 29, and 31 each coordinate Ca(2+). Residue H47 is part of the active site. D48 is a binding site for Ca(2+). D89 is an active-site residue.

In terms of assembly, monomer. Ca(2+) serves as cofactor. As to expression, expressed by the venom gland.

It is found in the secreted. The enzyme catalyses a 1,2-diacyl-sn-glycero-3-phosphocholine + H2O = a 1-acyl-sn-glycero-3-phosphocholine + a fatty acid + H(+). Its activity is regulated as follows. Inhibited by Mn(2+), Mg(2+), Zn(2+) and Cu(2+). In terms of biological role, snake venom phospholipase A2 (PLA2) that displays neurotoxic and myotoxic activities. Induces inflammatory edema by mechanisms involving mast cell activation and arachidonic acid metabolites. Increases plasma creatine kinase activity. PLA2 catalyzes the calcium-dependent hydrolysis of the 2-acyl groups in 3-sn-phosphoglycerides. This chain is Basic phospholipase A2 LmTX-I, found in Lachesis muta muta (Bushmaster).